The following is a 290-amino-acid chain: 4-hydroxy-tetrahydrodipicolinate synthase (290 aa).

Thr44 provides a ligand contact to pyruvate. Residue Tyr132 is the Proton donor/acceptor of the active site. Lys160 functions as the Schiff-base intermediate with substrate in the catalytic mechanism. Ile202 serves as a coordination point for pyruvate.

It belongs to the DapA family. In terms of assembly, homotetramer; dimer of dimers.

It is found in the cytoplasm. The enzyme catalyses L-aspartate 4-semialdehyde + pyruvate = (2S,4S)-4-hydroxy-2,3,4,5-tetrahydrodipicolinate + H2O + H(+). It functions in the pathway amino-acid biosynthesis; L-lysine biosynthesis via DAP pathway; (S)-tetrahydrodipicolinate from L-aspartate: step 3/4. Catalyzes the condensation of (S)-aspartate-beta-semialdehyde [(S)-ASA] and pyruvate to 4-hydroxy-tetrahydrodipicolinate (HTPA). This is 4-hydroxy-tetrahydrodipicolinate synthase from Ruegeria pomeroyi (strain ATCC 700808 / DSM 15171 / DSS-3) (Silicibacter pomeroyi).